We begin with the raw amino-acid sequence, 290 residues long: 33 kDa chaperonin (290 aa).

Cystine bridges form between cysteine 235–cysteine 237 and cysteine 268–cysteine 271.

The protein belongs to the HSP33 family. Post-translationally, under oxidizing conditions two disulfide bonds are formed involving the reactive cysteines. Under reducing conditions zinc is bound to the reactive cysteines and the protein is inactive.

The protein localises to the cytoplasm. Functionally, redox regulated molecular chaperone. Protects both thermally unfolding and oxidatively damaged proteins from irreversible aggregation. Plays an important role in the bacterial defense system toward oxidative stress. The protein is 33 kDa chaperonin of Streptococcus pneumoniae (strain JJA).